The sequence spans 474 residues: Hepatocyte nuclear factor 4-alpha (474 aa).

The segment at residues 57–132 (SALCAICGDR…AGMKKEAVQN (76 aa)) is a DNA-binding region (nuclear receptor). NR C4-type zinc fingers lie at residues 60 to 80 (CAIC…CDGC) and 96 to 120 (CRFS…LKKC). A phosphoserine mark is found at serine 142 and serine 143. A Phosphotyrosine modification is found at tyrosine 144. The NR LBD domain maps to 147–377 (SSLPSINALL…NLLQEMLLGG (231 aa)). Threonine 166 carries the phosphothreonine modification. Serine 167 carries the post-translational modification Phosphoserine. Residues lysine 234 and lysine 307 each participate in a glycyl lysine isopeptide (Lys-Gly) (interchain with G-Cter in ubiquitin) cross-link. At serine 313 the chain carries Phosphoserine; by AMPK. The 9aaTAD signature appears at 368–376 (NLLQEMLLG). The segment at 419–447 (EWPRPRGQAATPETPQPSPPGGSGSEPYK) is disordered. Threonine 429 and threonine 432 each carry phosphothreonine. Serine 436 carries the phosphoserine modification. Lysine 458 carries the N6-acetyllysine modification.

It belongs to the nuclear hormone receptor family. NR2 subfamily. In terms of assembly, homodimerization is required for HNF4-alpha to bind to its recognition site. Interacts with CLOCK, BMAL1, CRY1, CRY2, PER1 and PER2. Interacts with NR0B2/SHP; the resulting heterodimer is transcriptionally inactive. Interacts with DDX3X; this interaction disrupts the interaction between HNF4 and NR0B2 that forms inactive heterodimers and enhances the formation of active HNF4 homodimers. Post-translationally, phosphorylated on tyrosine residue(s); phosphorylation is important for its DNA-binding activity. Phosphorylation may directly or indirectly play a regulatory role in the subnuclear distribution. Phosphorylation at Ser-313 by AMPK reduces the ability to form homodimers and bind DNA. In terms of processing, acetylation at Lys-458 lowers transcriptional activation by about two-fold.

It is found in the nucleus. Transcriptional regulator which controls the expression of hepatic genes during the transition of endodermal cells to hepatic progenitor cells, facilitating the recruitment of RNA pol II to the promoters of target genes. Activates the transcription of CYP2C38. Represses the CLOCK-BMAL1 transcriptional activity and is essential for circadian rhythm maintenance and period regulation in the liver and colon cells. In Homo sapiens (Human), this protein is Hepatocyte nuclear factor 4-alpha (HNF4A).